The primary structure comprises 129 residues: Translation initiation factor 5A (129 aa).

A Hypusine modification is found at K36.

The protein belongs to the eIF-5A family.

It is found in the cytoplasm. In terms of biological role, functions by promoting the formation of the first peptide bond. This chain is Translation initiation factor 5A (eIF5A), found in Methanobrevibacter smithii (strain ATCC 35061 / DSM 861 / OCM 144 / PS).